The sequence spans 145 residues: Methyl-coenzyme M reductase I operon protein D (145 aa).

As to quaternary structure, MCR is composed of three subunits: alpha, beta, and gamma. The function of proteins C and D is not known.

The polypeptide is Methyl-coenzyme M reductase I operon protein D (mcrD) (Methanothermobacter marburgensis (strain ATCC BAA-927 / DSM 2133 / JCM 14651 / NBRC 100331 / OCM 82 / Marburg) (Methanobacterium thermoautotrophicum)).